A 125-amino-acid chain; its full sequence is N-alpha-acetyltransferase 38, NatC auxiliary subunit (125 aa).

The tract at residues 1-42 is disordered; the sequence is MAGAGPTMLLREENGCCSRRQSSSSAGDSDGEQEDSPATRAR. The residue at position 2 (A2) is an N-acetylalanine. The segment covering 18–28 has biased composition (low complexity); that stretch reads SRRQSSSSAGD. Phosphoserine occurs at positions 22, 25, and 29. The Sm domain occupies 40 to 118; that stretch reads RARQQLEALL…IVSIEVQRES (79 aa).

Belongs to the snRNP Sm proteins family. In terms of assembly, component of the N-terminal acetyltransferase C (NatC) complex, which is composed of NAA35, NAA38 and NAA30.

The protein localises to the cytoplasm. Its subcellular location is the nucleus. In terms of biological role, auxillary component of the N-terminal acetyltransferase C (NatC) complex which catalyzes acetylation of N-terminal methionine residues. N-terminal acetylation protects proteins from ubiquitination and degradation by the N-end rule pathway. The protein is N-alpha-acetyltransferase 38, NatC auxiliary subunit (Naa38) of Mus musculus (Mouse).